An 87-amino-acid chain; its full sequence is Cell division topological specificity factor (87 aa).

Belongs to the MinE family.

Functionally, prevents the cell division inhibition by proteins MinC and MinD at internal division sites while permitting inhibition at polar sites. This ensures cell division at the proper site by restricting the formation of a division septum at the midpoint of the long axis of the cell. The sequence is that of Cell division topological specificity factor from Roseiflexus castenholzii (strain DSM 13941 / HLO8).